An 89-amino-acid chain; its full sequence is uncharacterized protein (89 aa).

2 stretches are compositionally biased toward basic residues: residues 1–17 and 65–89; these read MPPHGHHHHHHGHHGHH and HHGHHHHHGHHGHHDHHHHGHHGHH. 2 disordered regions span residues 1–25 and 60–89; these read MPPHGHHHHHHGHHGHHEHITITPV and LETGHHHGHHHHHGHHGHHDHHHHGHHGHH.

This is an uncharacterized protein from Dictyostelium discoideum (Social amoeba).